A 490-amino-acid chain; its full sequence is MRSNPTXSGSEVSAVEKKNLGRIVQIIGPVLDVAFPPGKMPYIYNALVVQGRDNEQMNVTCEVQQILGNNRVRAVAMSDTDGLMRGMEVIDTGVSISVPVGGATLGRIFNVLGEPVDKLGPVDTKTTSPIHRSAPAFIQLDTKLSIFETGIKVVDLLAPYRRGGKIGLFGGAGVGKTVLIMELINNIAKAHGGVSVFGGVGERTREGNDLYMEMKESGVINEENIAESKVALVYGQMNEPPGARMRVGLTALTMAEYFRDVNEQDVLLFIDNIFRFVQAGSEVSALLGRMPSAVGYQPTLSTEMGTLQERITSTKEGSITSIQAVYVPADDLTDPAPATTFAHLDATTVLSRGLAAKGIYPAVDPLDSTSTMLQPRIVGEEHYETAQRVKETLQRYKELQDIIAILGLDELSEEDRLTVARARKIERFLSQPFFVAEVFTGSPGKYVGLAETIRGFQLILSGELDGLPEQAFYLVGNIDEATAKAMNLKT.

Residue 170–177 (GGAGVGKT) coordinates ATP.

This sequence belongs to the ATPase alpha/beta chains family. In terms of assembly, F-type ATPases have 2 components, CF(1) - the catalytic core - and CF(0) - the membrane proton channel. CF(1) has five subunits: alpha(3), beta(3), gamma(1), delta(1), epsilon(1). CF(0) has four main subunits: a(1), b(1), b'(1) and c(9-12).

The protein localises to the plastid. It is found in the chloroplast thylakoid membrane. It catalyses the reaction ATP + H2O + 4 H(+)(in) = ADP + phosphate + 5 H(+)(out). Functionally, produces ATP from ADP in the presence of a proton gradient across the membrane. The catalytic sites are hosted primarily by the beta subunits. This chain is ATP synthase subunit beta, chloroplastic, found in Cressa truxillensis (Spreading alkaliweed).